A 393-amino-acid chain; its full sequence is GDP-4-keto-6-deoxy-D-mannose 3-dehydratase (393 aa).

Residue 30 to 33 (NMFT) coordinates GDP-4-dehydro-alpha-D-rhamnose. The helical transmembrane segment at 53 to 73 (YSVMVSSGSTANLLMIAALFF) threads the bilayer. Pyridoxal 5'-phosphate contacts are provided by residues 60–61 (GS), Trp-92, Glu-166, and Ser-187. The Proton donor/acceptor role is filled by His-192. An L-glutamate-binding site is contributed by His-219. GDP-4-dehydro-alpha-D-rhamnose is bound at residue Arg-223. Asn-252 is a binding site for pyridoxal 5'-phosphate. Arg-254 is a binding site for L-glutamate. GDP-4-dehydro-alpha-D-rhamnose is bound at residue Glu-333.

Belongs to the DegT/DnrJ/EryC1 family. In terms of assembly, homodimer. Pyridoxal 5'-phosphate is required as a cofactor.

Its subcellular location is the cell membrane. It catalyses the reaction GDP-4-dehydro-alpha-D-rhamnose + L-glutamate = GDP-4-dehydro-3,6-dideoxy-alpha-D-mannose + 2-oxoglutarate + NH4(+). Its pathway is nucleotide-sugar metabolism; GDP-L-colitose biosynthesis. Functionally, involved in the biosynthesis of L-colitose, a 3,6-dideoxyhexose present in the O-antigen region of lipopolysaccharides (LPS), where it serves as an antigenic determinant and is vital for bacterial defense and survival. Catalyzes the removal of the C3'-hydroxyl group from GDP-4-keto-6-deoxy-D-mannose via a combined transamination-deoxygenation reaction. The catalysis is initiated by a transamination step in which pyridoxal 5'-phosphate (PLP) is converted to pyridoxamine 5'-phosphate (PMP) in the presence of L-glutamate. This coenzyme then forms a Schiff base with GDP-4-keto-6-deoxy-D-mannose and the resulting adduct undergoes a PMP-mediated beta-dehydration reaction to give a sugar enamine intermediate, which after tautomerization and hydrolysis to release ammonia yields GDP-4-keto-3,6-dideoxy-D-mannose as a product. The chain is GDP-4-keto-6-deoxy-D-mannose 3-dehydratase from Yersinia pseudotuberculosis.